The following is a 265-amino-acid chain: Glutamate racemase (265 aa).

Substrate is bound by residues Asp-7 to Ser-8 and Tyr-39 to Gly-40. Cys-70 functions as the Proton donor/acceptor in the catalytic mechanism. Residue Asn-71–Thr-72 coordinates substrate. Cys-177 (proton donor/acceptor) is an active-site residue.

Belongs to the aspartate/glutamate racemases family.

It catalyses the reaction L-glutamate = D-glutamate. Its pathway is cell wall biogenesis; peptidoglycan biosynthesis. Functionally, provides the (R)-glutamate required for cell wall biosynthesis. This is Glutamate racemase from Prochlorococcus marinus (strain NATL1A).